We begin with the raw amino-acid sequence, 281 residues long: Sulfur carrier protein FdhD (281 aa).

Cys-117 serves as the catalytic Cysteine persulfide intermediate.

It belongs to the FdhD family.

The protein localises to the cytoplasm. Its function is as follows. Required for formate dehydrogenase (FDH) activity. Acts as a sulfur carrier protein that transfers sulfur from IscS to the molybdenum cofactor prior to its insertion into FDH. This chain is Sulfur carrier protein FdhD, found in Xanthomonas axonopodis pv. citri (strain 306).